Here is a 198-residue protein sequence, read N- to C-terminus: HTH-type transcriptional regulator BetI (198 aa).

An HTH tetR-type domain is found at 8–68 (PLRRRELIDA…ATMRHLLREL (61 aa)). Residues 31–50 (TVAQIAHEAGVSPALAHHYF) constitute a DNA-binding region (H-T-H motif).

Its pathway is amine and polyamine biosynthesis; betaine biosynthesis via choline pathway [regulation]. Repressor involved in the biosynthesis of the osmoprotectant glycine betaine. It represses transcription of the choline transporter BetT and the genes of BetAB involved in the synthesis of glycine betaine. This Brucella suis biovar 1 (strain 1330) protein is HTH-type transcriptional regulator BetI.